A 117-amino-acid polypeptide reads, in one-letter code: Probable prefoldin subunit 1 (117 aa).

Belongs to the prefoldin subunit beta family. As to quaternary structure, heterohexamer of two PFD-alpha type and four PFD-beta type subunits.

Its subcellular location is the cytoplasm. Its function is as follows. Binds specifically to cytosolic chaperonin (c-CPN) and transfers target proteins to it. Binds to nascent polypeptide chain and promotes folding in an environment in which there are many competing pathways for nonnative proteins. Has a role in gonadogenesis. The polypeptide is Probable prefoldin subunit 1 (pfd-1) (Caenorhabditis briggsae).